We begin with the raw amino-acid sequence, 212 residues long: MTGTFITVEGPDGAGKTTQLQLLADRLTAEGYEIVMTREPGGTRIGNEIRSLILNPDFQEMDEMTEILLYAASRAQHVNELIRPALAAGKIVLCDRFIDASIAYQGYGLGYTIEQVRSINQQATNHLTPDRTYLFDLTVSESKQRMMDRGALDRIEQRDDAFRQRVYDGFMTLAVQEPERIQLVDANQSIESLQTELCKDVLTYLKKRERLS.

10–17 (GPDGAGKT) is an ATP binding site.

Belongs to the thymidylate kinase family.

It carries out the reaction dTMP + ATP = dTDP + ADP. In terms of biological role, phosphorylation of dTMP to form dTDP in both de novo and salvage pathways of dTTP synthesis. The polypeptide is Thymidylate kinase (Exiguobacterium sibiricum (strain DSM 17290 / CCUG 55495 / CIP 109462 / JCM 13490 / 255-15)).